The sequence spans 420 residues: MNSAFFEELKARGLVYQVTDEEALQKQLNEESVKLYIGFDPTADSLHIGHLLPILMLRRFQQNGHVPIALVGGGTGMIGDPSFKDAERSLNTLDTVKAWSESIKGQLSRFIDFEDEKNPAILANNYDWLGELSLIDFLRDVGKNFTINYMMSKESVKRRIETGISYTEFAYQLLQAYDFLKLYETEGCLLQLGGSDQWGNITSGIELLRREQEVQGFGLTMPLITKADGTKFGKTEGNAVWLDAEKTSPYEFYQFWINTDDRDVVKFLKYFTFLTLDEIATIEEEFTANPGQRAAQKALAKEVTTLVHGEAAYHQAVKISEALFSGDIQSLTAEEIKQGFKDVPTYEVQPEDQLSLVDLLVTSKIEPSKRQAREDVQNGAIYVNGERRQDLAAELTETDKIEGQFTVIRRGKKKYFLLKY.

Tyr-36 contacts L-tyrosine. A 'HIGH' region motif is present at residues 41-50 (PTADSLHIGH). L-tyrosine contacts are provided by Tyr-171 and Gln-175. The 'KMSKS' region signature appears at 231–235 (KFGKT). Lys-234 provides a ligand contact to ATP. Residues 354-420 (LSLVDLLVTS…GKKKYFLLKY (67 aa)) form the S4 RNA-binding domain.

Belongs to the class-I aminoacyl-tRNA synthetase family. TyrS type 1 subfamily. In terms of assembly, homodimer.

Its subcellular location is the cytoplasm. It carries out the reaction tRNA(Tyr) + L-tyrosine + ATP = L-tyrosyl-tRNA(Tyr) + AMP + diphosphate + H(+). Its function is as follows. Catalyzes the attachment of tyrosine to tRNA(Tyr) in a two-step reaction: tyrosine is first activated by ATP to form Tyr-AMP and then transferred to the acceptor end of tRNA(Tyr). The sequence is that of Tyrosine--tRNA ligase 2 from Enterococcus faecalis (strain ATCC 700802 / V583).